The sequence spans 126 residues: Small ribosomal subunit protein uS13 (126 aa).

The interval 101-126 (QKTKNNCRTRKGKKKTVANKKKKINK) is disordered.

Belongs to the universal ribosomal protein uS13 family. Part of the 30S ribosomal subunit. Forms a loose heterodimer with protein S19. Forms two bridges to the 50S subunit in the 70S ribosome.

Functionally, located at the top of the head of the 30S subunit, it contacts several helices of the 16S rRNA. In the 70S ribosome it contacts the 23S rRNA (bridge B1a) and protein L5 of the 50S subunit (bridge B1b), connecting the 2 subunits; these bridges are implicated in subunit movement. Contacts the tRNAs in the A and P-sites. The polypeptide is Small ribosomal subunit protein uS13 (Karelsulcia muelleri (strain GWSS) (Sulcia muelleri)).